Consider the following 254-residue polypeptide: rRNA N-glycosylase sapovaccarin-S1 (254 aa).

It belongs to the ribosome-inactivating protein family. Type 1 RIP subfamily. Expressed in seeds; most abundant in the perisperm.

It carries out the reaction Endohydrolysis of the N-glycosidic bond at one specific adenosine on the 28S rRNA.. In terms of biological role, exhibits N-glycosylase activity. Catalyzes the release of one adenine from a ribosome. Acts as a ribosome-inactivating protein and inhibits protein synthesis in a rabbit-reticulocyte lysate system and in various cell lines (in vitro). Induces cell death in Huh-7 liver cells. May contribute to the protection against plant pests and predators or play a role in regulating the death of plant cells. This is rRNA N-glycosylase sapovaccarin-S1 from Gypsophila vaccaria (Cow soapwort).